The primary structure comprises 271 residues: UPF0328 protein ECU09_0020 (271 aa).

This sequence belongs to the UPF0328 family.

The polypeptide is UPF0328 protein ECU09_0020 (Encephalitozoon cuniculi (strain GB-M1) (Microsporidian parasite)).